We begin with the raw amino-acid sequence, 274 residues long: tRNA pseudouridine synthase A (274 aa).

The active-site Nucleophile is Asp-60. Tyr-118 serves as a coordination point for substrate.

The protein belongs to the tRNA pseudouridine synthase TruA family. Homodimer.

It catalyses the reaction uridine(38/39/40) in tRNA = pseudouridine(38/39/40) in tRNA. In terms of biological role, formation of pseudouridine at positions 38, 39 and 40 in the anticodon stem and loop of transfer RNAs. This chain is tRNA pseudouridine synthase A, found in Picosynechococcus sp. (strain ATCC 27264 / PCC 7002 / PR-6) (Agmenellum quadruplicatum).